The sequence spans 113 residues: Endoribonuclease SymE (113 aa).

The SpoVT-AbrB domain maps to 29-74; that stretch reads SRYPDYSRIPAITLKGQWLEAAGFATGTAIDVKVMEGCIVLTAQPP.

This sequence belongs to the SymE family.

It localises to the cytoplasm. Functionally, involved in the degradation and recycling of damaged RNA. It is itself a target for degradation by the ATP-dependent protease Lon. The polypeptide is Endoribonuclease SymE (Escherichia coli O1:K1 / APEC).